The chain runs to 869 residues: Bifunctional uridylyltransferase/uridylyl-removing enzyme (869 aa).

Residues 1 to 332 (MTDTPAERPD…QFDGEATPEP (332 aa)) form a uridylyltransferase region. A uridylyl-removing region spans residues 333 to 691 (LGGGFSLRRG…RRAVPDNDAL (359 aa)). Residues 450–572 (VDQHTLMVLR…VGTRERLDYL (123 aa)) form the HD domain. ACT domains are found at residues 692 to 774 (EVFV…RAVP) and 798 to 869 (RISL…LDPV).

This sequence belongs to the GlnD family. The cofactor is Mg(2+).

It carries out the reaction [protein-PII]-L-tyrosine + UTP = [protein-PII]-uridylyl-L-tyrosine + diphosphate. The catalysed reaction is [protein-PII]-uridylyl-L-tyrosine + H2O = [protein-PII]-L-tyrosine + UMP + H(+). With respect to regulation, uridylyltransferase (UTase) activity is inhibited by glutamine, while glutamine activates uridylyl-removing (UR) activity. In terms of biological role, modifies, by uridylylation and deuridylylation, the PII regulatory proteins (GlnB and homologs), in response to the nitrogen status of the cell that GlnD senses through the glutamine level. Under low glutamine levels, catalyzes the conversion of the PII proteins and UTP to PII-UMP and PPi, while under higher glutamine levels, GlnD hydrolyzes PII-UMP to PII and UMP (deuridylylation). Thus, controls uridylylation state and activity of the PII proteins, and plays an important role in the regulation of nitrogen assimilation and metabolism. In Xanthomonas axonopodis pv. citri (strain 306), this protein is Bifunctional uridylyltransferase/uridylyl-removing enzyme.